A 163-amino-acid polypeptide reads, in one-letter code: Shikimate kinase (163 aa).

10–15 (GVGKSS) contacts ATP. Position 14 (Ser-14) interacts with Mg(2+). Substrate-binding residues include Asp-28, Arg-52, and Gly-75. Arg-116 lines the ATP pocket. Position 134 (Arg-134) interacts with substrate. Position 151 (Arg-151) interacts with ATP.

Belongs to the shikimate kinase family. As to quaternary structure, monomer. Requires Mg(2+) as cofactor.

It localises to the cytoplasm. The catalysed reaction is shikimate + ATP = 3-phosphoshikimate + ADP + H(+). Its pathway is metabolic intermediate biosynthesis; chorismate biosynthesis; chorismate from D-erythrose 4-phosphate and phosphoenolpyruvate: step 5/7. Its function is as follows. Catalyzes the specific phosphorylation of the 3-hydroxyl group of shikimic acid using ATP as a cosubstrate. In Streptococcus thermophilus (strain ATCC BAA-491 / LMD-9), this protein is Shikimate kinase.